The following is a 1046-amino-acid chain: MPMDQSISSPLFPMEKDIDIPLDATPLAQSSSLQLFIHLAEPVVFLQGFDPQKTEYPSVVLRGCLVVRILKPTKLKSISLSFKGYSRTEWPEGIPPKRQEFVEIKDIVDHTWALYPPTEQKSKKKMDASAPNESNNAANNFLTKESGASLYRTLSDNETITSRKNSISGLSSLNLSPLGAPGNSSVNVKDRESRQRSRSSSVTSSNGPSRNLSPINLLKRATSPSVSHHNYKPTTTSIFSDLLNNTFTHNDAASHHGHHIPTSSNHLAMTSNNFTSGSGGEFFVFQPGDYIYAFEELIPQAYPESIKADFGFVEYFLFASIERPGAFKSNISARQVVNIVRTQAHNSVEESEPIIISRDWENQLYYDIVIASKDIILDAFLPITFKFAPLDKVTLHRIRIYVTETMEYYCREKKVHRMEPTKKFLLTEQKGPKLPNLPNDANLSKAKNMGNLLQDPKNGDLVNKEYEYQIFIPSRFNNHQQLHPDTSYENIKANHWIKICLRLSRVVDNKRKHYEISIDSPIHVLHRLCSHANTLLPSYDGHPASFPKETDSSISSILESSDDNINLYHNSNIFFPKEVLSSPVLSPNVQPLDILIPHLPSTSLTRNSRQFNRNSKSHPSDNTIFNSAKLKSNIYQPESLQRELASPQAIPLSPITSPMSNMEVPPPDFDFSSDFISDAASGTTTTEVSSSESSILPRDPPSYKDTVLHDNNQKRRPNSKHPTPPSLKASHPNKNSDKNSSETLNKKESMSKIEENKHKRETTPKKRENRDVKSLSTPQREESKDSTSTGNQSNEKNRKRVLSLSSSLHSSPNNSGFAHSALGNLSNESLRSLNRRESVQDNLPSTIRHDNPFFTDLNQVLIEDELKNHDKNELNRHSTNTSSTPASARSSFDYSGINISKDKLNMEPLLSKTETLTNKVNEDSFLRPNDSYVDLLEPSVDTTIDITAPYARNSSAWHPLQNDNDNNQFSPLLGSNENFLNAANAQNSAESDHNNDIFTQGSGLTESSKNSDSEERFISRLSSPEKVLINTLDNESGLQSINESTL.

The interval 115 to 141 (YPPTEQKSKKKMDASAPNESNNAANNF) is disordered. Residues 128 to 140 (ASAPNESNNAANN) show a composition bias toward low complexity. A phosphoserine mark is found at Ser-155 and Ser-162. Composition is skewed to low complexity over residues 168-179 (SGLSSLNLSPLG) and 198-210 (RSSSVTSSNGPSR). The disordered stretch occupies residues 168–230 (SGLSSLNLSP…ATSPSVSHHN (63 aa)). Phosphoserine is present on residues Ser-213 and Ser-586. The span at 605–614 (TRNSRQFNRN) shows a compositional bias: polar residues. Disordered regions lie at residues 605-627 (TRNSRQFNRNSKSHPSDNTIFNS) and 651-820 (PLSP…FAHS). The segment covering 669–694 (FDFSSDFISDAASGTTTTEVSSSESS) has biased composition (low complexity). A compositionally biased stretch (basic and acidic residues) spans 734–785 (KNSDKNSSETLNKKESMSKIEENKHKRETTPKKRENRDVKSLSTPQREESKD). Positions 802–811 (LSLSSSLHSS) are enriched in low complexity. Ser-826 and Ser-838 each carry phosphoserine. Residues 868–889 (NHDKNELNRHSTNTSSTPASAR) form a disordered region. A compositionally biased stretch (polar residues) spans 877–889 (HSTNTSSTPASAR). Ser-900 is modified (phosphoserine). A disordered region spans residues 986-1017 (QNSAESDHNNDIFTQGSGLTESSKNSDSEERF). Over residues 996–1008 (DIFTQGSGLTESS) the composition is skewed to polar residues. Ser-1022 and Ser-1023 each carry phosphoserine.

This sequence belongs to the ALY1 family. Interacts with PCL6, PCL7 and RSP5. Post-translationally, ubiquitinated by RSP5. Phosphorylated by the cyclin-CDKs PCL6-PHO85 and PCL7-PHO85.

The protein localises to the cytoplasm. Its function is as follows. May regulate endocytosis by recruiting RSP5 ubiquitin ligase activity to specific plasma membrane proteins in response to extracellular stimuli. The protein is Arrestin-related trafficking adapter 3 (ALY2) of Saccharomyces cerevisiae (strain ATCC 204508 / S288c) (Baker's yeast).